Here is a 738-residue protein sequence, read N- to C-terminus: Phosphoribosylformylglycinamidine synthase subunit PurL (738 aa).

Residue His-41 is part of the active site. ATP is bound by residues Tyr-44 and Lys-83. Glu-85 contacts Mg(2+). Substrate-binding positions include 86-89 (SHNH) and Arg-108. The active-site Proton acceptor is the His-87. A Mg(2+)-binding site is contributed by Asp-109. Gln-233 contributes to the substrate binding site. Asp-261 is a binding site for Mg(2+). 305–307 (ESQ) contacts substrate. ATP-binding residues include Asp-490 and Gly-527. Asn-528 provides a ligand contact to Mg(2+). Ser-530 is a binding site for substrate.

The protein belongs to the FGAMS family. Monomer. Part of the FGAM synthase complex composed of 1 PurL, 1 PurQ and 2 PurS subunits.

It is found in the cytoplasm. The enzyme catalyses N(2)-formyl-N(1)-(5-phospho-beta-D-ribosyl)glycinamide + L-glutamine + ATP + H2O = 2-formamido-N(1)-(5-O-phospho-beta-D-ribosyl)acetamidine + L-glutamate + ADP + phosphate + H(+). It participates in purine metabolism; IMP biosynthesis via de novo pathway; 5-amino-1-(5-phospho-D-ribosyl)imidazole from N(2)-formyl-N(1)-(5-phospho-D-ribosyl)glycinamide: step 1/2. In terms of biological role, part of the phosphoribosylformylglycinamidine synthase complex involved in the purines biosynthetic pathway. Catalyzes the ATP-dependent conversion of formylglycinamide ribonucleotide (FGAR) and glutamine to yield formylglycinamidine ribonucleotide (FGAM) and glutamate. The FGAM synthase complex is composed of three subunits. PurQ produces an ammonia molecule by converting glutamine to glutamate. PurL transfers the ammonia molecule to FGAR to form FGAM in an ATP-dependent manner. PurS interacts with PurQ and PurL and is thought to assist in the transfer of the ammonia molecule from PurQ to PurL. The polypeptide is Phosphoribosylformylglycinamidine synthase subunit PurL (Alkaliphilus metalliredigens (strain QYMF)).